A 76-amino-acid chain; its full sequence is Acyl carrier protein (76 aa).

One can recognise a Carrier domain in the interval 1–76; that stretch reads MATFDDVKDV…AAIDYIESKQ (76 aa). Ser36 bears the O-(pantetheine 4'-phosphoryl)serine mark.

It belongs to the acyl carrier protein (ACP) family. Post-translationally, 4'-phosphopantetheine is transferred from CoA to a specific serine of apo-ACP by AcpS. This modification is essential for activity because fatty acids are bound in thioester linkage to the sulfhydryl of the prosthetic group.

It is found in the cytoplasm. Its pathway is lipid metabolism; fatty acid biosynthesis. In terms of biological role, carrier of the growing fatty acid chain in fatty acid biosynthesis. This is Acyl carrier protein from Deinococcus deserti (strain DSM 17065 / CIP 109153 / LMG 22923 / VCD115).